The chain runs to 51 residues: uncharacterized protein (51 aa).

This is an uncharacterized protein from Escherichia coli (strain K12).